Here is a 76-residue protein sequence, read N- to C-terminus: UPF0235 protein MMAR_2910 (76 aa).

The protein belongs to the UPF0235 family.

This Mycobacterium marinum (strain ATCC BAA-535 / M) protein is UPF0235 protein MMAR_2910.